A 758-amino-acid polypeptide reads, in one-letter code: 5-methyltetrahydropteroyltriglutamate--homocysteine methyltransferase (758 aa).

Residues 15-18 (RELK) and K114 each bind 5-methyltetrahydropteroyltri-L-glutamate. L-homocysteine-binding positions include 433-435 (IGS) and E486. L-methionine contacts are provided by residues 433 to 435 (IGS) and E486. 5-methyltetrahydropteroyltri-L-glutamate-binding positions include 517–518 (RC) and W563. D601 provides a ligand contact to L-homocysteine. D601 is an L-methionine binding site. E607 is a 5-methyltetrahydropteroyltri-L-glutamate binding site. Residues H643, C645, and E667 each coordinate Zn(2+). H696 acts as the Proton donor in catalysis. C728 is a binding site for Zn(2+).

The protein belongs to the vitamin-B12 independent methionine synthase family. The cofactor is Zn(2+).

It carries out the reaction 5-methyltetrahydropteroyltri-L-glutamate + L-homocysteine = tetrahydropteroyltri-L-glutamate + L-methionine. Its pathway is amino-acid biosynthesis; L-methionine biosynthesis via de novo pathway; L-methionine from L-homocysteine (MetE route): step 1/1. In terms of biological role, catalyzes the transfer of a methyl group from 5-methyltetrahydrofolate to homocysteine resulting in methionine formation. The protein is 5-methyltetrahydropteroyltriglutamate--homocysteine methyltransferase of Syntrophotalea carbinolica (strain DSM 2380 / NBRC 103641 / GraBd1) (Pelobacter carbinolicus).